The following is a 330-amino-acid chain: Delta-aminolevulinic acid dehydratase (330 aa).

Zn(2+) contacts are provided by Cys122, Cys124, His131, and Cys132. Lys199 serves as the catalytic Schiff-base intermediate with substrate. At Lys199 the chain carries N6-succinyllysine. Arg209 is a 5-aminolevulinate binding site. Ser215 bears the Phosphoserine mark. Arg221 lines the 5-aminolevulinate pocket. Residue Cys223 coordinates Zn(2+). Catalysis depends on Lys252, which acts as the Schiff-base intermediate with substrate. At Lys252 the chain carries N6-succinyllysine. 2 residues coordinate 5-aminolevulinate: Ser279 and Tyr318.

This sequence belongs to the ALAD family. As to quaternary structure, homooctamer; active form. Homohexamer; low activity form. It depends on Zn(2+) as a cofactor.

It is found in the cytoplasm. Its subcellular location is the cytosol. The enzyme catalyses 2 5-aminolevulinate = porphobilinogen + 2 H2O + H(+). It participates in porphyrin-containing compound metabolism; protoporphyrin-IX biosynthesis; coproporphyrinogen-III from 5-aminolevulinate: step 1/4. Its activity is regulated as follows. Can alternate between a fully active homooctamer and a low-activity homohexamer. A bound magnesium ion may promote the assembly of the fully active homooctamer. The magnesium-binding site is absent in the low-activity homohexamer. Inhibited by compounds that favor the hexameric state. Inhibited by divalent lead ions. The lead ions partially displace the zinc cofactor. Functionally, catalyzes an early step in the biosynthesis of tetrapyrroles. Binds two molecules of 5-aminolevulinate per subunit, each at a distinct site, and catalyzes their condensation to form porphobilinogen. This is Delta-aminolevulinic acid dehydratase (Alad) from Mus musculus (Mouse).